The following is a 539-amino-acid chain: Protein PNS1 (539 aa).

Positions 1–38 (MPLNEKYERPPQPPPAYDPNHRPPSSSENSAAANVNDG) are disordered. Residues 1 to 81 (MPLNEKYERP…NDNKPRWNDW (81 aa)) are Cytoplasmic-facing. Residues 25 to 36 (SSSENSAAANVN) are compositionally biased toward low complexity. A helical transmembrane segment spans residues 82-102 (PFTIFFLCTVGGFIAIAAITL). The Extracellular portion of the chain corresponds to 103 to 129 (RAWSQTYSSTGSGIYDGVNTGTLNTNA). The helical transmembrane segment at 130–150 (AILLVFVCIIALVFSVLGLTL) threads the bilayer. Over 151–157 (CRIFPKQ) the chain is Cytoplasmic. The helical transmembrane segment at 158 to 178 (FIYCGMVINLVASLGTAIMYM) threads the bilayer. Topologically, residues 179–182 (SLRY) are extracellular. Residues 183–203 (WSAGIVFLVFTFMTAWCYWGM) traverse the membrane as a helical segment. Residues 204 to 226 (RSRIPLSVAVLKVVVDAMKKCPQ) are Cytoplasmic-facing. The helical transmembrane segment at 227-247 (IFFVSFVGALVASAFGFLFSA) threads the bilayer. Residues 248-274 (VIVATYIKYDPNSSNGGCDVSGGSCSH) lie on the Extracellular side of the membrane. Asn-259 carries an N-linked (GlcNAc...) asparagine glycan. A helical transmembrane segment spans residues 275–295 (SKLIGVLVVVFFCGYYISEVI). Over 296 to 332 (RNVIHCVISGVFGSWYYMSKSDQGMPRWPAFGALKRA) the chain is Cytoplasmic. The chain crosses the membrane as a helical span at residues 333–353 (MTYSFGSICFGSLLVALIDLL). At 354 to 371 (RQILQMIRHDVTSSGGGQ) the chain is on the extracellular side. The chain crosses the membrane as a helical span at residues 372–392 (IAIQILFMVFDWIIGFLKWLA). At 393-436 (EYFNHYAYSFIALYGKPYLRAAKETWYMLREKGMDALINDNLIN) the chain is on the cytoplasmic side. The chain crosses the membrane as a helical span at residues 437-457 (IALGLFSMFASYMTALFTFLY). Residues 458-473 (LRFTSPQYNSNGAYNG) are Extracellular-facing. A helical transmembrane segment spans residues 474 to 494 (ALMAFSFVIALQICNIATEAI). At 495 to 539 (RSGTATFFVALGNDPEVFHHSYPHRFDEIFRAYPDVLRKLSHQNV) the chain is on the cytoplasmic side.

The protein belongs to the CTL (choline transporter-like) family.

Its subcellular location is the cell membrane. Its function is as follows. Probably involved in transport through the plasma membrane. In Saccharomyces cerevisiae (strain ATCC 204508 / S288c) (Baker's yeast), this protein is Protein PNS1 (PNS1).